The sequence spans 383 residues: MAEQDYYDILGVSKDASEKDIKRAYRRLAAKYHPDVNHEPGAEEKFKKINEAYETLSDSQKRAQYDQFGSAGPQGAGGQGFGGFGGGQAYSNFGGGFDDIFSQFFGGGGRTRRDPTAPRQGRDLQYAMTLDFMDAVFGKTTTIKYDRDAECKTCHGTGAKPGKSPITCPRCHGAGVITSVRQTPLGNMQTQTTCPECNGTGKIIKPEDRCDTCHGAGHVHERHELEVKVPAGVDDGQQMRLQHQGDAGENGGPAGDLYIVFRVTPSREFRRDGSTIYVDRDISFAQAALGDEVKVKTVHGDVNLKIPAGTQSETNFRLRGKGVPHLNGNGNGDEHVTVHVKTPKSLNKRQREAMLAFAAASGEDVKGVKKTVLDKLRDAFEDK.

Positions 5–69 (DYYDILGVSK…QKRAQYDQFG (65 aa)) constitute a J domain. The segment at 138 to 222 (GKTTTIKYDR…CHGAGHVHER (85 aa)) adopts a CR-type zinc-finger fold. The Zn(2+) site is built by Cys151, Cys154, Cys168, Cys171, Cys194, Cys197, Cys210, and Cys213. 4 CXXCXGXG motif repeats span residues 151 to 158 (CKTCHGTG), 168 to 175 (CPRCHGAG), 194 to 201 (CPECNGTG), and 210 to 217 (CDTCHGAG).

The protein belongs to the DnaJ family. As to quaternary structure, homodimer. It depends on Zn(2+) as a cofactor.

The protein resides in the cytoplasm. In terms of biological role, participates actively in the response to hyperosmotic and heat shock by preventing the aggregation of stress-denatured proteins and by disaggregating proteins, also in an autonomous, DnaK-independent fashion. Unfolded proteins bind initially to DnaJ; upon interaction with the DnaJ-bound protein, DnaK hydrolyzes its bound ATP, resulting in the formation of a stable complex. GrpE releases ADP from DnaK; ATP binding to DnaK triggers the release of the substrate protein, thus completing the reaction cycle. Several rounds of ATP-dependent interactions between DnaJ, DnaK and GrpE are required for fully efficient folding. Also involved, together with DnaK and GrpE, in the DNA replication of plasmids through activation of initiation proteins. This chain is Chaperone protein DnaJ, found in Limosilactobacillus reuteri (strain DSM 20016) (Lactobacillus reuteri).